Reading from the N-terminus, the 270-residue chain is Imidazoleglycerol-phosphate dehydratase 1, chloroplastic (270 aa).

A chloroplast-targeting transit peptide spans 1 to 62; the sequence is MELSSASAIL…QSQLRQSISC (62 aa). At Ser-63 the chain carries N-acetylserine. Substrate is bound by residues Glu-84, 110-118, 136-140, Arg-162, and Arg-184; these read HMLDQLASH and HHTNE. The Mn(2+) site is built by His-110, His-136, His-137, and Glu-140. Residues His-208, His-232, His-233, and Glu-236 each coordinate Mn(2+). Substrate contacts are provided by residues 232–240 and 262–264; these read HHIIEATFK and SSK. Residues 250 to 270 are disordered; it reads TETDPRRGGTIPSSKGVLSRS.

Belongs to the imidazoleglycerol-phosphate dehydratase family. The cofactor is Mn(2+).

The protein resides in the plastid. It localises to the chloroplast. It catalyses the reaction D-erythro-1-(imidazol-4-yl)glycerol 3-phosphate = 3-(imidazol-4-yl)-2-oxopropyl phosphate + H2O. It participates in amino-acid biosynthesis; L-histidine biosynthesis; L-histidine from 5-phospho-alpha-D-ribose 1-diphosphate: step 6/9. The protein is Imidazoleglycerol-phosphate dehydratase 1, chloroplastic of Arabidopsis thaliana (Mouse-ear cress).